The chain runs to 608 residues: Protein Spindly (608 aa).

Met1 carries the N-acetylmethionine modification. A coiled-coil region spans residues 1 to 445; that stretch reads MEADITNLRN…LKLKYEPEER (445 aa). The segment at 465–487 is disordered; it reads PEETEETAAASATEDGVSRLPPH. Residues Ser516, Ser518, and Ser558 each carry the phosphoserine modification.

Belongs to the Spindly family. In terms of assembly, interacts with KNTC1 and ZW10. These interactions appear weak and may be transient or indirect. Interacts with dynein intermediate chain and dynactin (DCTN1). Interacts with the catalytically active form of USP45. Monoubiquitinated with'Lys-48' linkage. Deubiquitinated by USP45.

The protein localises to the cytoplasm. It localises to the cytoskeleton. Its subcellular location is the microtubule organizing center. It is found in the centrosome. The protein resides in the chromosome. The protein localises to the centromere. It localises to the kinetochore. Its subcellular location is the nucleus. It is found in the spindle pole. In terms of biological role, required for the localization of dynein and dynactin to the mitotic kintochore. Dynein is believed to control the initial lateral interaction between the kinetochore and spindle microtubules and to facilitate the subsequent formation of end-on kinetochore-microtubule attachments mediated by the NDC80 complex. Also required for correct spindle orientation. Does not appear to be required for the removal of spindle assembly checkpoint (SAC) proteins from the kinetochore upon bipolar spindle attachment. Acts as an adapter protein linking the dynein motor complex to various cargos and converts dynein from a non-processive to a highly processive motor in the presence of dynactin. Facilitates the interaction between dynein and dynactin and activates dynein processivity (the ability to move along a microtubule for a long distance without falling off the track). Plays a role in cell migration. In Mus musculus (Mouse), this protein is Protein Spindly (Spdl1).